The sequence spans 544 residues: Methionine--tRNA ligase (544 aa).

A 'HIGH' region motif is present at residues 10-20 (PYANGSLHLGH). Residues cysteine 141, cysteine 144, cysteine 153, and cysteine 156 each contribute to the Zn(2+) site. The 'KMSKS' region motif lies at 329-333 (KLSTS). Threonine 332 is a binding site for ATP.

This sequence belongs to the class-I aminoacyl-tRNA synthetase family. MetG type 1 subfamily. Monomer. Zn(2+) is required as a cofactor.

It is found in the cytoplasm. It carries out the reaction tRNA(Met) + L-methionine + ATP = L-methionyl-tRNA(Met) + AMP + diphosphate. Functionally, is required not only for elongation of protein synthesis but also for the initiation of all mRNA translation through initiator tRNA(fMet) aminoacylation. The chain is Methionine--tRNA ligase from Bacillus mycoides (strain KBAB4) (Bacillus weihenstephanensis).